Reading from the N-terminus, the 278-residue chain is Thiazole synthase (278 aa).

Lysine 107 acts as the Schiff-base intermediate with DXP in catalysis. Residues glycine 168, 194–195, and 216–217 each bind 1-deoxy-D-xylulose 5-phosphate; these read AG and AS.

Belongs to the ThiG family. In terms of assembly, homotetramer. Forms heterodimers with either ThiH or ThiS.

It is found in the cytoplasm. The enzyme catalyses [ThiS sulfur-carrier protein]-C-terminal-Gly-aminoethanethioate + 2-iminoacetate + 1-deoxy-D-xylulose 5-phosphate = [ThiS sulfur-carrier protein]-C-terminal Gly-Gly + 2-[(2R,5Z)-2-carboxy-4-methylthiazol-5(2H)-ylidene]ethyl phosphate + 2 H2O + H(+). The protein operates within cofactor biosynthesis; thiamine diphosphate biosynthesis. Functionally, catalyzes the rearrangement of 1-deoxy-D-xylulose 5-phosphate (DXP) to produce the thiazole phosphate moiety of thiamine. Sulfur is provided by the thiocarboxylate moiety of the carrier protein ThiS. In vitro, sulfur can be provided by H(2)S. This chain is Thiazole synthase, found in Corynebacterium urealyticum (strain ATCC 43042 / DSM 7109).